The following is a 173-amino-acid chain: MQDEFKTDTPRTEAGSEKETMPSMEELLKAAELAAAEHHDAWLRAKAETENMRRRAAEDVDKARKFAVESFAGELLAVKDSLEAALAAESPSVDNLKDGVTLTLKQLSAVFGKFNLHDIEPLGEKFDPHLHQAIQVVESEQPANTVVTVLQKGYRLHDRTLRPALVMVAKGKD.

The span at 1-20 shows a compositional bias: basic and acidic residues; that stretch reads MQDEFKTDTPRTEAGSEKET. The segment at 1–23 is disordered; the sequence is MQDEFKTDTPRTEAGSEKETMPS.

It belongs to the GrpE family. In terms of assembly, homodimer.

The protein resides in the cytoplasm. Functionally, participates actively in the response to hyperosmotic and heat shock by preventing the aggregation of stress-denatured proteins, in association with DnaK and GrpE. It is the nucleotide exchange factor for DnaK and may function as a thermosensor. Unfolded proteins bind initially to DnaJ; upon interaction with the DnaJ-bound protein, DnaK hydrolyzes its bound ATP, resulting in the formation of a stable complex. GrpE releases ADP from DnaK; ATP binding to DnaK triggers the release of the substrate protein, thus completing the reaction cycle. Several rounds of ATP-dependent interactions between DnaJ, DnaK and GrpE are required for fully efficient folding. This Thiobacillus denitrificans (strain ATCC 25259 / T1) protein is Protein GrpE.